A 462-amino-acid polypeptide reads, in one-letter code: Cytochrome P450 20A1 (462 aa).

Residues F4–P24 form a helical membrane-spanning segment. Heme is bound at residue C409.

It belongs to the cytochrome P450 family. Requires heme as cofactor.

The protein resides in the membrane. The sequence is that of Cytochrome P450 20A1 (Cyp20a1) from Rattus norvegicus (Rat).